We begin with the raw amino-acid sequence, 587 residues long: MRVLILLLMLLLPGLSQAQPGDDLFAPRGATQTDFLPVEKAFRFTWERLDDGQVQLRWQIAPGYYLYQKRLRFDGLDPALQPQLPPGESHSDEFFGESQVYRQSLELTLPAAAAGQLRLGWQGCADAGLCYPPQSQALDLGGTGPAAAGTSGEVAEDQGLAGSLQAGNLAWSLLLFFGLGLLLAFAPCSLPMLPILAGLVVGSGAGPRRGLLLAGSYVLSMALVYAGLGVVAALLGGNLQAWLQQPWLLGSFAALFVFLALPMFGFFELQLPAALRDRLDGLSRGRKGGSLAGAAALGALSGLLVGPCMTAPLAGALLYIAQTGNALHGGLVLFSLGLGIGMPLLLLVTVGSRFLPKPGPWMNLVKGVFGFLFLGTAWILLRPLLGEALWIGLGGALLLVLAYAALHTARGLARHAVLFGAAGCIFGLWGAAMLLGAAAGADDPWRPLQVYAAANRGATPTASAHEAFLTVSQPAELDRQLAAAKAEGQWVLLDYYADWCVSCRIMEKQVFAKPDVLAALQGVRLLRLDVTADNAASRELLHRYQVPGPPSLIWIGPEGEERRARRLTGEVDAGGFLAHWQATRERG.

Residues 1 to 18 form the signal peptide; it reads MRVLILLLMLLLPGLSQA. The Periplasmic portion of the chain corresponds to 19–172; sequence QPGDDLFAPR…SLQAGNLAWS (154 aa). 2 disulfide bridges follow: Cys-124-Cys-130 and Cys-188-Cys-308. Residues 173-193 traverse the membrane as a helical segment; sequence LLLFFGLGLLLAFAPCSLPML. At 194–216 the chain is on the cytoplasmic side; it reads PILAGLVVGSGAGPRRGLLLAGS. The chain crosses the membrane as a helical span at residues 217–237; sequence YVLSMALVYAGLGVVAALLGG. Over 238 to 246 the chain is Periplasmic; it reads NLQAWLQQP. Residues 247-267 form a helical membrane-spanning segment; the sequence is WLLGSFAALFVFLALPMFGFF. The Cytoplasmic portion of the chain corresponds to 268–299; the sequence is ELQLPAALRDRLDGLSRGRKGGSLAGAAALGA. Residues 300–320 traverse the membrane as a helical segment; that stretch reads LSGLLVGPCMTAPLAGALLYI. Residues 321-330 are Periplasmic-facing; it reads AQTGNALHGG. A helical membrane pass occupies residues 331–351; it reads LVLFSLGLGIGMPLLLLVTVG. Residues 352–360 lie on the Cytoplasmic side of the membrane; the sequence is SRFLPKPGP. Residues 361 to 381 form a helical membrane-spanning segment; that stretch reads WMNLVKGVFGFLFLGTAWILL. Topologically, residues 382–383 are periplasmic; it reads RP. A helical transmembrane segment spans residues 384–404; it reads LLGEALWIGLGGALLLVLAYA. The Cytoplasmic portion of the chain corresponds to 405–416; that stretch reads ALHTARGLARHA. A helical membrane pass occupies residues 417-437; that stretch reads VLFGAAGCIFGLWGAAMLLGA. Over 438–587 the chain is Periplasmic; the sequence is AAGADDPWRP…AHWQATRERG (150 aa). A Thioredoxin domain is found at 448-585; the sequence is LQVYAAANRG…FLAHWQATRE (138 aa). A disulfide bridge connects residues Cys-500 and Cys-503.

It belongs to the thioredoxin family. DsbD subfamily.

Its subcellular location is the cell inner membrane. The catalysed reaction is [protein]-dithiol + NAD(+) = [protein]-disulfide + NADH + H(+). It catalyses the reaction [protein]-dithiol + NADP(+) = [protein]-disulfide + NADPH + H(+). Its function is as follows. Required to facilitate the formation of correct disulfide bonds in some periplasmic proteins and for the assembly of the periplasmic c-type cytochromes. Acts by transferring electrons from cytoplasmic thioredoxin to the periplasm. This transfer involves a cascade of disulfide bond formation and reduction steps. The polypeptide is Thiol:disulfide interchange protein DsbD 2 (Pseudomonas aeruginosa (strain ATCC 15692 / DSM 22644 / CIP 104116 / JCM 14847 / LMG 12228 / 1C / PRS 101 / PAO1)).